We begin with the raw amino-acid sequence, 156 residues long: Aspartate carbamoyltransferase regulatory chain (156 aa).

The Zn(2+) site is built by Cys110, Cys115, Cys140, and Cys143.

Belongs to the PyrI family. As to quaternary structure, contains catalytic and regulatory chains. Zn(2+) is required as a cofactor.

Functionally, involved in allosteric regulation of aspartate carbamoyltransferase. The polypeptide is Aspartate carbamoyltransferase regulatory chain (Methanocella arvoryzae (strain DSM 22066 / NBRC 105507 / MRE50)).